Reading from the N-terminus, the 180-residue chain is Inosine/xanthosine triphosphatase (180 aa).

A substrate-binding site is contributed by 8 to 13; it reads TTNPAK. Mg(2+) is bound by residues aspartate 38 and glutamate 68. 68-69 serves as a coordination point for substrate; sequence EA.

It belongs to the YjjX NTPase family. Homodimer. Mg(2+) serves as cofactor. Requires Mn(2+) as cofactor.

It carries out the reaction XTP + H2O = XDP + phosphate + H(+). The catalysed reaction is ITP + H2O = IDP + phosphate + H(+). Phosphatase that hydrolyzes non-canonical purine nucleotides such as XTP and ITP to their respective diphosphate derivatives. Probably excludes non-canonical purines from DNA/RNA precursor pool, thus preventing their incorporation into DNA/RNA and avoiding chromosomal lesions. This Yersinia pseudotuberculosis serotype IB (strain PB1/+) protein is Inosine/xanthosine triphosphatase.